The primary structure comprises 60 residues: Large ribosomal subunit protein bL32 (60 aa).

Positions 1–23 (MAKHPVPKKKTSKARRDARRSHH) are enriched in basic residues. A disordered region spans residues 1 to 30 (MAKHPVPKKKTSKARRDARRSHHALTPPTL).

As to quaternary structure, part of the 50S ribosomal subunit.

Found on the solvent side of the large subunit. This chain is Large ribosomal subunit protein bL32 (rpmF), found in Thermus thermophilus (strain ATCC 27634 / DSM 579 / HB8).